The following is a 237-amino-acid chain: DNA repair protein RecO (237 aa).

The protein belongs to the RecO family.

Functionally, involved in DNA repair and RecF pathway recombination. The polypeptide is DNA repair protein RecO (Rickettsia conorii (strain ATCC VR-613 / Malish 7)).